We begin with the raw amino-acid sequence, 159 residues long: Ribosome maturation factor RimP (159 aa).

The protein belongs to the RimP family.

The protein localises to the cytoplasm. Functionally, required for maturation of 30S ribosomal subunits. The protein is Ribosome maturation factor RimP of Streptococcus pneumoniae serotype 19F (strain G54).